We begin with the raw amino-acid sequence, 309 residues long: Taste receptor type 2 member 8 (309 aa).

Residues 1–7 (MFSPADN) lie on the Extracellular side of the membrane. Residues 8-28 (IFIILITGEFIIGILGNGYIG) form a helical membrane-spanning segment. Residues 29 to 50 (LVNWIDWIKKKKISTIDCILTN) are Cytoplasmic-facing. A helical transmembrane segment spans residues 51 to 71 (LVISRICLISVMVVNGIVIVL). The Extracellular portion of the chain corresponds to 72 to 82 (YPDVYTKTKLQ). A helical membrane pass occupies residues 83-103 (IVICTFWTFANYLNMWFTACL). The Cytoplasmic portion of the chain corresponds to 104–131 (NVFYSLKVANSSHPLFLWLKRKIDMVVR). A helical transmembrane segment spans residues 132-152 (WILLGCFAISLLVSLIIATVL). Residues 153 to 184 (SHDYRFHAIAKHKRNVTEMFHVSKMPYFEPLT) lie on the Extracellular side of the membrane. Asn167 carries N-linked (GlcNAc...) asparagine glycosylation. A helical transmembrane segment spans residues 185–205 (LFNLLAIVPFIVSLMSFFLLV). Over 206–239 (RSLWRHTKQIKLYATGGRDPSTEAHVRAIKTMTL) the chain is Cytoplasmic. A helical membrane pass occupies residues 240–260 (LIFFFFLYYITSLLVXFSYLI). Over 261–266 (TNYKLA) the chain is Extracellular. Residues 267–287 (MAFGEIVAILYPSGHSLILII) traverse the membrane as a helical segment. Residues 288–309 (LNNKLRQASVRMLTCRKIACVT) lie on the Cytoplasmic side of the membrane.

Belongs to the G-protein coupled receptor T2R family.

It localises to the membrane. Its function is as follows. Receptor that may play a role in the perception of bitterness and is gustducin-linked. May play a role in sensing the chemical composition of the gastrointestinal content. The activity of this receptor may stimulate alpha gustducin, mediate PLC-beta-2 activation and lead to the gating of TRPM5. This chain is Taste receptor type 2 member 8 (TAS2R8), found in Papio hamadryas (Hamadryas baboon).